The chain runs to 861 residues: MKLLKLPWLQHREEHKSYEVYTCDVSPDSQRLATGGLDGKIRIWSIPDILKFASNPNASTDKDILMKPLSTMSRHAGSVTTVKFSPDGKYLASGSDDRILLIWELEGGTTQPMFGAESTDIEHWNVRRRLVAHDNDIQDICWAPDSSIMVSVGLDRAIIIWNGSTFEKVKRFDVHQSHVKGVVFDPANKYFATASDDRTIKMFRYHKTGETSFSVEHVITEPFKGSPLTTYFRRLSWSPDGQHIAAPNAMNGPVSTVAIIERGTWESPVSLVGHDQPTEVASFNPRIFKRQKDDSTTDTIDGKKTGISDEVDCIVASSGQDKTLAVWSTSKARPLIVAQDICGKSITDMSWTPDGKILFITSLDSSIVVLTFEDNEFGEAIPLEQNIEYLHRYGVDKDSLVFPETVEQLILEDQAKNLKKSNVDMNLLENRLGKPGTIAEPNILQVRSKKRAQLTGTGNHTDNNTTSKAEPPHVNILQVKRKNKVTGVTEVLHDTVVKNGKKRVAPTLITMGHSPDKSRKRVILSTAQSLNNTVQPTTKPAPEEKSTLAKLQSTKLSKPSFSIPRLGIHTLIMGFKERTRENFINQGSTDSTVDESNVNIDEGPQQLEQNSAEEHLLTLNSKTTLEKIWRDEPNTRYLEFNSILPDADAVLREMGTIDDLYVLEVRNGVERSIQFDTEALYDNSTRVLGYHAGQRSFELFFPDVVLTCVGCMETKTWILATTTGQLFFIDTLGQARCPRISIGHKIIKLCTSQSHVIAITETALIYVWDLVSMSLTLKNIPLLPLLARDPITGNRARFTSKIKSAKMTENKDLQLVMTDIAPDSDSNPSTLHFLYSSSLSCWCSPKEALLVDASVEQVITS.

7 WD repeats span residues 14–54 (EHKS…KFAS), 74–113 (RHAG…TQPM), 132–171 (AHDN…KVKR), 174–213 (VHQS…ETSF), 227–270 (PLTT…SPVS), 295–337 (STTD…PLIV), and 341–382 (ICGK…EAIP). Positions 450–471 (KRAQLTGTGNHTDNNTTSKAEP) are disordered. The span at 455-466 (TGTGNHTDNNTT) shows a compositional bias: low complexity.

Belongs to the WD repeat HIR1 family.

It is found in the nucleus. Its function is as follows. Required for replication-independent chromatin assembly and for the periodic repression of histone gene transcription during the cell cycle. This is Protein HIR1 (HIR1) from Kluyveromyces lactis (strain ATCC 8585 / CBS 2359 / DSM 70799 / NBRC 1267 / NRRL Y-1140 / WM37) (Yeast).